The primary structure comprises 168 residues: Cofilin-1-B (168 aa).

Ala2 is modified (N-acetylalanine). The 150-residue stretch at 4 to 153 (GVMVSDDVVK…NDPCNLADKL (150 aa)) folds into the ADF-H domain. The Nuclear localization signal motif lies at 30–34 (KKRKK).

This sequence belongs to the actin-binding proteins ADF family. Post-translationally, inactive when phosphorylated. Phosphorylation levels vary during development. Oocytes contain only the phosphorylated form, and 80-95% of cfl1 protein is phosphorylated in unfertilized eggs. Rapid dephosphorylation occurs within 30 minutes after fertilization. Phosphorylation levels increase again between the morula and blastula stages (5-8 hpf) and then decrease again as gastrulation approaches. Dephosphorylated by pdxp. Expressed diffusely in both animal and vegetal hemispheres of the oocyte. During cleavage, expression accumulates around the cleavage furrow, along the vegetal membrane, and later in the midbody. Strongly expressed in the animal hemisphere during blastula stages, with most cells showing expression by gastrulation. By stage 17, expression is highest in cells of the developing neuroectoderm, and at stage 24 the notochord, neural tube, neural crest, somites and some cells of the archenteron show high expression. By stage 35, expression has declined in the notochord, but remains in the neural tube, epidermis and a layer of cells in the archenteron. Also highly expressed in the retina and neuronal cell bodies at the base of the cement gland but not the cement gland itself. At stage 38, expression is widespread, being highest in the nervous system and retina. In the adult, expression is high in the brain, heart, oocyte, stomach, and low in skeletal muscle.

It is found in the nucleus matrix. It localises to the cytoplasm. Its subcellular location is the cytoskeleton. The protein resides in the cell cortex. The protein localises to the membrane. In terms of biological role, may play a role in the regulation of cell morphology and cytoskeletal organization. Binds to F-actin and exhibits pH-sensitive F-actin depolymerizing activity. Required for formation of the cleavage furrow during cytokinesis. This Xenopus laevis (African clawed frog) protein is Cofilin-1-B (cfl1-b).